Here is a 222-residue protein sequence, read N- to C-terminus: Octanoyltransferase (222 aa).

The 181-residue stretch at 34–214 (GEAPSTVLLL…EFRKHEEALV (181 aa)) folds into the BPL/LPL catalytic domain. Residues 72 to 79 (RGGKLTWH), 144 to 146 (AIG), and 157 to 159 (GVA) each bind substrate. Cys175 acts as the Acyl-thioester intermediate in catalysis.

The protein belongs to the LipB family.

It is found in the cytoplasm. The enzyme catalyses octanoyl-[ACP] + L-lysyl-[protein] = N(6)-octanoyl-L-lysyl-[protein] + holo-[ACP] + H(+). It participates in protein modification; protein lipoylation via endogenous pathway; protein N(6)-(lipoyl)lysine from octanoyl-[acyl-carrier-protein]: step 1/2. Functionally, catalyzes the transfer of endogenously produced octanoic acid from octanoyl-acyl-carrier-protein onto the lipoyl domains of lipoate-dependent enzymes. Lipoyl-ACP can also act as a substrate although octanoyl-ACP is likely to be the physiological substrate. The protein is Octanoyltransferase of Pseudarthrobacter chlorophenolicus (strain ATCC 700700 / DSM 12829 / CIP 107037 / JCM 12360 / KCTC 9906 / NCIMB 13794 / A6) (Arthrobacter chlorophenolicus).